We begin with the raw amino-acid sequence, 483 residues long: Matrix metalloproteinase-20 (483 aa).

The signal sequence occupies residues 1–22 (MKVLPASGLAVFLIMALKFSTA). The propeptide occupies 23–107 (APSLVAASPR…PRCGVPDVAN (85 aa)). A Cysteine switch motif is present at residues 98 to 105 (PRCGVPDV). Cys100 is a Zn(2+) binding site. Residues Glu164, Ala165, and Asp166 each coordinate Ca(2+). 2 residues coordinate Zn(2+): His176 and Asp178. 4 residues coordinate Ca(2+): Asp183, Gly184, Arg186, and Thr188. His191 lines the Zn(2+) pocket. Ca(2+)-binding residues include Glu197, Gly198, Gly200, and Asp202. His204 is a binding site for Zn(2+). Ca(2+) is bound by residues Asp206 and Glu209. His226 contacts Zn(2+). The active site involves Glu227. Residues His230 and His236 each contribute to the Zn(2+) site. Hemopexin repeat units follow at residues 293–343 (PDLC…FPQL), 344–389 (MSNV…GFPR), 391–439 (VQQI…FSGV), and 440–483 (NGQI…WIGC). Cys296 and Cys483 are oxidised to a cystine.

It belongs to the peptidase M10A family. The cofactor is Zn(2+). Ca(2+) serves as cofactor. Autoactivates at least at the 107-Asn-|-Tyr-108 site. Expressed specifically in the enamel organ.

The protein localises to the secreted. It is found in the extracellular space. Its subcellular location is the extracellular matrix. In terms of biological role, degrades amelogenin, the major protein component of the enamel matrix and two of the macromolecules characterizing the cartilage extracellular matrix: aggrecan and the cartilage oligomeric matrix protein (COMP). May play a central role in tooth enamel formation. Cleaves aggrecan at the '360-Asn-|-Phe-361' site. In Homo sapiens (Human), this protein is Matrix metalloproteinase-20 (MMP20).